The primary structure comprises 332 residues: UDP-N-acetylenolpyruvoylglucosamine reductase (332 aa).

The 167-residue stretch at 55–221 folds into the FAD-binding PCMH-type domain; that stretch reads VGGAADLYVA…TQATLQLAPG (167 aa). The active site involves arginine 200. Serine 251 functions as the Proton donor in the catalytic mechanism. Residue glutamate 321 is part of the active site.

This sequence belongs to the MurB family. It depends on FAD as a cofactor.

The protein resides in the cytoplasm. It catalyses the reaction UDP-N-acetyl-alpha-D-muramate + NADP(+) = UDP-N-acetyl-3-O-(1-carboxyvinyl)-alpha-D-glucosamine + NADPH + H(+). It participates in cell wall biogenesis; peptidoglycan biosynthesis. Its function is as follows. Cell wall formation. The sequence is that of UDP-N-acetylenolpyruvoylglucosamine reductase from Nostoc punctiforme (strain ATCC 29133 / PCC 73102).